A 175-amino-acid chain; its full sequence is Mating-type protein ALPHA1 (175 aa).

The segment at residues 88 to 144 (SSKKYLNSFMAFRAYYSQFGSGVKQNVLSSLLAEEWHADKMQHGIWDYFAQQYNFIN) is a DNA-binding region (alpha box).

The protein belongs to the MATALPHA1 family. Binds DNA with a high specificity in complex with an MCM1 dimer. Interacts with STE12.

The protein localises to the nucleus. Its function is as follows. Mating type proteins are sequence specific DNA-binding proteins that act as master switches in yeast differentiation by controlling gene expression in a cell type-specific fashion. Transcriptional coactivator that, in alpha-cells, binds cooperatively with MCM1 and STE12 to a DNA sequence termed the QP' element, to activate the transcription of alpha-specific genes. This is Mating-type protein ALPHA1 (MATALPHA1) from Saccharomyces cerevisiae (strain ATCC 204508 / S288c) (Baker's yeast).